Here is a 101-residue protein sequence, read N- to C-terminus: Large ribosomal subunit protein uL23 (101 aa).

It belongs to the universal ribosomal protein uL23 family. Part of the 50S ribosomal subunit. Contacts protein L29, and trigger factor when it is bound to the ribosome.

In terms of biological role, one of the early assembly proteins it binds 23S rRNA. One of the proteins that surrounds the polypeptide exit tunnel on the outside of the ribosome. Forms the main docking site for trigger factor binding to the ribosome. The protein is Large ribosomal subunit protein uL23 of Azoarcus sp. (strain BH72).